A 485-amino-acid polypeptide reads, in one-letter code: Glutamate--tRNA ligase 1 (485 aa).

The 'HIGH' region motif lies at 10–20 (PSPTGAIHIGN). Residues 252–256 (KLSKR) carry the 'KMSKS' region motif. Lysine 255 serves as a coordination point for ATP.

This sequence belongs to the class-I aminoacyl-tRNA synthetase family. Glutamate--tRNA ligase type 1 subfamily. Monomer.

It localises to the cytoplasm. The enzyme catalyses tRNA(Glu) + L-glutamate + ATP = L-glutamyl-tRNA(Glu) + AMP + diphosphate. Functionally, catalyzes the attachment of glutamate to tRNA(Glu) in a two-step reaction: glutamate is first activated by ATP to form Glu-AMP and then transferred to the acceptor end of tRNA(Glu). The polypeptide is Glutamate--tRNA ligase 1 (Thermoanaerobacter pseudethanolicus (strain ATCC 33223 / 39E) (Clostridium thermohydrosulfuricum)).